The primary structure comprises 325 residues: Melanocortin receptor 5 (325 aa).

Over 1-37 (MNSSFHLHFLDLGLNATEGNLSGLSVRNASSPCEDMG) the chain is Extracellular. Residues asparagine 2, asparagine 15, asparagine 20, and asparagine 28 are each glycosylated (N-linked (GlcNAc...) asparagine). A helical membrane pass occupies residues 38-61 (IAVEVFLALGLISLLENILVIGAI). At 62 to 73 (VRNRNLHIPMYF) the chain is on the cytoplasmic side. Residues 74–97 (FVGSLAVADMLVSLSNFWETITIY) traverse the membrane as a helical segment. Over 98 to 114 (LLTNKHLVMADASVRHL) the chain is Extracellular. The helical transmembrane segment at 115–138 (DNVFDSMICISVVASMCSLLAIAV) threads the bilayer. The Cytoplasmic segment spans residues 139 to 155 (DRYVTIFCRLRYQRIMT). A helical membrane pass occupies residues 156–179 (GRRSGAIIAGIWAFCTSCGTVFIV). The Extracellular segment spans residues 180–186 (YYESTYV). The chain crosses the membrane as a helical span at residues 187-211 (VVCLIAMFLTMLLLMASLYTHMFLL). At 212–239 (ARTHVRRIAALPGHSSVRQRTGVKGAIT) the chain is on the cytoplasmic side. Residues 240 to 265 (LAMLLGVFIICWAPFFLHLILMISCP) form a helical membrane-spanning segment. Residues 266–273 (QNLYCSCF) lie on the Extracellular side of the membrane. A helical transmembrane segment spans residues 274–297 (MSHFNMYLILIMCNSVIDPLIYAF). The Cytoplasmic portion of the chain corresponds to 298-325 (RSQEMRKTFKEIVCFQGFRTPCRFPSTY). Cysteine 311 carries the S-palmitoyl cysteine lipid modification.

The protein belongs to the G-protein coupled receptor 1 family.

It is found in the cell membrane. Receptor for MSH (alpha, beta and gamma) and ACTH. The activity of this receptor is mediated by G proteins which activate adenylate cyclase. This receptor is a possible mediator of the immunomodulation properties of melanocortins. The polypeptide is Melanocortin receptor 5 (MC5R) (Ovis aries (Sheep)).